Reading from the N-terminus, the 445-residue chain is FAS-associated factor 2 (445 aa).

Position 2 is an N-acetylalanine (A2). The UBA domain occupies 12-48 (EQTEKLLQFQDLTGIESMEQCRLALEQHNWNMEAAVQ). N6-acetyllysine is present on K167. The stretch at 275–350 (SERLEREERN…EEKERKLECL (76 aa)) forms a coiled coil. The tract at residues 300–361 (SLRADQEKER…PEPSPDDPES (62 aa)) is disordered. The span at 303–348 (ADQEKERKKREEKERKRRKEEEVQQQKLAEERRRQNLQEEKERKLE) shows a compositional bias: basic and acidic residues. The region spanning 357-439 (DDPESVKIIF…GLSHTEVLFV (83 aa)) is the UBX domain.

Identified in a complex that contains SEL1L, OS9, FAF2/UBXD8, UBE2J1/UBC6E and AUP1. Interacts with YOD1. Interacts (via N-terminus) with UBQLN2 (via C-terminus). Interacts with PNPLA2. Interacts with ZFAND2B; probably through VCP. Interacts with LMBR1L and UBAC2.

The protein resides in the cytoplasm. The protein localises to the lipid droplet. Its subcellular location is the endoplasmic reticulum. Functionally, plays an important role in endoplasmic reticulum-associated degradation (ERAD) that mediates ubiquitin-dependent degradation of misfolded endoplasmic reticulum proteins. By controlling the steady-state expression of the IGF1R receptor, indirectly regulates the insulin-like growth factor receptor signaling pathway. Involved in inhibition of lipid droplet degradation by binding to phospholipase PNPL2 and inhibiting its activity by promoting dissociation of PNPL2 from its endogenous activator, ABHD5 which inhibits the rate of triacylglycerol hydrolysis. Involved in stress granule disassembly: associates with ubiquitinated G3BP1 in response to heat shock, thereby promoting interaction between ubiquitinated G3BP1 and VCP, followed by G3BP1 extraction from stress granules and stress granule disassembly. This Mus musculus (Mouse) protein is FAS-associated factor 2 (Faf2).